We begin with the raw amino-acid sequence, 78 residues long: MTNKGQLLQDPFLNALRKEHVPVSIYLVNGIKLQGHIESFDQYVVLLRNTVTQMVYKHAISTVVPARAVNLSLESDAE.

The region spanning 10 to 69 (DPFLNALRKEHVPVSIYLVNGIKLQGHIESFDQYVVLLRNTVTQMVYKHAISTVVPARAV) is the Sm domain.

It belongs to the Hfq family. As to quaternary structure, homohexamer.

Functionally, RNA chaperone that binds small regulatory RNA (sRNAs) and mRNAs to facilitate mRNA translational regulation in response to envelope stress, environmental stress and changes in metabolite concentrations. Also binds with high specificity to tRNAs. This chain is RNA-binding protein Hfq, found in Herminiimonas arsenicoxydans.